A 285-amino-acid polypeptide reads, in one-letter code: Acetyl-coenzyme A carboxylase carboxyl transferase subunit beta 2 (285 aa).

Positions 1–20 are disordered; sequence MAIRSLFSGNRKKKEDGQEK. The region spanning 26 to 285 is the CoA carboxyltransferase N-terminal domain; that stretch reads LMTKCPECRH…MHTKGGVQHV (260 aa). The Zn(2+) site is built by Cys-30, Cys-33, Cys-49, and Cys-52. A C4-type zinc finger spans residues 30–52; the sequence is CPECRHIQLTKELEKNHKVCTKC.

This sequence belongs to the AccD/PCCB family. Acetyl-CoA carboxylase is a heterohexamer composed of biotin carboxyl carrier protein (AccB), biotin carboxylase (AccC) and two subunits each of ACCase subunit alpha (AccA) and ACCase subunit beta (AccD). Zn(2+) serves as cofactor.

It is found in the cytoplasm. The catalysed reaction is N(6)-carboxybiotinyl-L-lysyl-[protein] + acetyl-CoA = N(6)-biotinyl-L-lysyl-[protein] + malonyl-CoA. It participates in lipid metabolism; malonyl-CoA biosynthesis; malonyl-CoA from acetyl-CoA: step 1/1. In terms of biological role, component of the acetyl coenzyme A carboxylase (ACC) complex. Biotin carboxylase (BC) catalyzes the carboxylation of biotin on its carrier protein (BCCP) and then the CO(2) group is transferred by the transcarboxylase to acetyl-CoA to form malonyl-CoA. The sequence is that of Acetyl-coenzyme A carboxylase carboxyl transferase subunit beta 2 from Lysinibacillus sphaericus (strain C3-41).